A 39-amino-acid polypeptide reads, in one-letter code: Neuropeptide F (39 aa).

Phe-39 carries the post-translational modification Phenylalanine amide.

The protein belongs to the NPY family. In terms of tissue distribution, neuronal somata and fibers.

The protein resides in the secreted. Its function is as follows. May have an important physiological role in neuroregulation. The protein is Neuropeptide F of Cornu aspersum (Brown garden snail).